A 76-amino-acid polypeptide reads, in one-letter code: DNA gyrase inhibitor YacG (76 aa).

Positions 20, 23, 39, and 43 each coordinate Zn(2+). The segment at 54–76 (EEKSIPGAPDLSDSDGWSDDMGY) is disordered. Acidic residues predominate over residues 65 to 76 (SDSDGWSDDMGY).

This sequence belongs to the DNA gyrase inhibitor YacG family. In terms of assembly, interacts with GyrB. It depends on Zn(2+) as a cofactor.

In terms of biological role, inhibits all the catalytic activities of DNA gyrase by preventing its interaction with DNA. Acts by binding directly to the C-terminal domain of GyrB, which probably disrupts DNA binding by the gyrase. The polypeptide is DNA gyrase inhibitor YacG (Photobacterium profundum (strain SS9)).